The chain runs to 433 residues: Serine hydroxymethyltransferase (433 aa).

(6S)-5,6,7,8-tetrahydrofolate is bound by residues leucine 121 and glycine 125–isoleucine 127. At lysine 231 the chain carries N6-(pyridoxal phosphate)lysine.

It belongs to the SHMT family. Homodimer. Requires pyridoxal 5'-phosphate as cofactor.

The protein resides in the cytoplasm. It participates in amino-acid biosynthesis; glycine biosynthesis; glycine from L-serine: step 1/1. Functionally, catalyzes the reversible interconversion of serine and glycine with a modified folate serving as the one-carbon carrier. Also exhibits a pteridine-independent aldolase activity toward beta-hydroxyamino acids, producing glycine and aldehydes, via a retro-aldol mechanism. This is Serine hydroxymethyltransferase from Picrophilus torridus (strain ATCC 700027 / DSM 9790 / JCM 10055 / NBRC 100828 / KAW 2/3).